The primary structure comprises 104 residues: SOSS complex subunit C (104 aa).

Alanine 2 carries the post-translational modification N-acetylalanine.

Belongs to the SOSS-C family. In terms of assembly, component of the SOSS complex, composed of SOSS-B (SOSS-B1/NABP2 or SOSS-B2/NABP1), SOSS-A/INTS3 and SOSS-C/INIP. SOSS complexes containing SOSS-B1/NABP2 are more abundant than complexes containing SOSS-B2/NABP1. Interacts with INTS3; the interaction is direct.

The protein resides in the nucleus. Functionally, component of the SOSS complex, a multiprotein complex that functions downstream of the MRN complex to promote DNA repair and G2/M checkpoint. The SOSS complex associates with single-stranded DNA at DNA lesions and influences diverse endpoints in the cellular DNA damage response including cell-cycle checkpoint activation, recombinational repair and maintenance of genomic stability. Required for efficient homologous recombination-dependent repair of double-strand breaks (DSBs) and ATM-dependent signaling pathways. In Bos taurus (Bovine), this protein is SOSS complex subunit C (INIP).